Reading from the N-terminus, the 199-residue chain is FMN-dependent NADH:quinone oxidoreductase 2 (199 aa).

Residues serine 10, 16 to 18 (SVS), and 96 to 99 (MYNF) each bind FMN.

This sequence belongs to the azoreductase type 1 family. As to quaternary structure, homodimer. Requires FMN as cofactor.

The catalysed reaction is 2 a quinone + NADH + H(+) = 2 a 1,4-benzosemiquinone + NAD(+). It carries out the reaction N,N-dimethyl-1,4-phenylenediamine + anthranilate + 2 NAD(+) = 2-(4-dimethylaminophenyl)diazenylbenzoate + 2 NADH + 2 H(+). Its function is as follows. Quinone reductase that provides resistance to thiol-specific stress caused by electrophilic quinones. In terms of biological role, also exhibits azoreductase activity. Catalyzes the reductive cleavage of the azo bond in aromatic azo compounds to the corresponding amines. This Pseudomonas putida (strain ATCC 47054 / DSM 6125 / CFBP 8728 / NCIMB 11950 / KT2440) protein is FMN-dependent NADH:quinone oxidoreductase 2.